A 2193-amino-acid chain; its full sequence is Highly reducing polyketide synthase VdtX (2193 aa).

The region spanning 1-417 (MAICGIAVRL…GVNAHVIIES (417 aa)) is the Ketosynthase family 3 (KS3) domain. Active-site for beta-ketoacyl synthase activity residues include C170, H306, and H340. The malonyl-CoA:ACP transacylase (MAT) domain stretch occupies residues 513-809 (VFAGQGAQWP…HPYVPCLIRF (297 aa)). The N-terminal hotdog fold stretch occupies residues 877–1001 (HELLGTRVVD…GEVAQENLSR (125 aa)). Residues 877–1128 (HELLGTRVVD…DIVLRPLGAN (252 aa)) form a dehydratase (DH) domain region. The PKS/mFAS DH domain maps to 877 to 1202 (HELLGTRVVD…LQRQPKPSSE (326 aa)). H909 acts as the Proton acceptor; for dehydratase activity in catalysis. The interval 1032–1202 (SVTSNTVSGR…LQRQPKPSSE (171 aa)) is C-terminal hotdog fold. The Proton donor; for dehydratase activity role is filled by D1093. The tract at residues 1256–1390 (NYLNEPQQRI…DRWDSILKAA (135 aa)) is methyltransferase (CMet) domain. The interval 1575–1783 (GQQVQLLGDD…SGQHIGQLRL (209 aa)) is enoyl reductase (ER) domain. Residues 1807 to 1981 (ASYLLVGGLG…ASVIDIGEVQ (175 aa)) are ketoreductase (KR) domain. Residues 2102–2183 (PSATQFVSLE…AMGEHVIREL (82 aa)) form the Carrier domain. S2143 bears the O-(pantetheine 4'-phosphoryl)serine mark.

Highly reducing polyketide synthase; part of the gene cluster that mediates the biosynthesis of viriditoxin, one of the 'classical' secondary metabolites produced by fungi and that has antibacterial activity. The first step is performed by the polyketide synthase VdtA which condenses one acetyl-CoA and 6 malonyl-CoA units to form the heptaketide monomer backbone of viriditoxin. The product of VdtA is then O-methylated on C7 by the O-methyltransferase VdtC. The O-methyl group is important for the stereoselective coupling of the monomers at the final step of viriditoxin biosynthesis. The short-chain dehydrogenase/reductase VdtF is involved in the reduction of the C3-C4 double bond. The FAD-binding monooxygenase VdtE then converts the ketone group into a methyl-ester group to yield semi-viriditoxin. Finally, the laccase VdtB is involved in dimerization of 2 semi-viriditoxin molecules to yield the final viriditoxin. The non-catalytic carboxylesterase-like protein VdtD affects the stereochemistical outcome of the coupling. The highly reducing polyketide synthase VdtX is not involved in viriditoxin synthesis, but might possibly play a role in the production of additional metabolites not identified yet. The sequence is that of Highly reducing polyketide synthase VdtX from Byssochlamys spectabilis (Paecilomyces variotii).